A 146-amino-acid chain; its full sequence is Large ribosomal subunit protein uL15 (146 aa).

Basic and acidic residues predominate over residues 1 to 13 (MKLHELKPAEGSR). The interval 1–51 (MKLHELKPAEGSRKVRNRVGRGIGSGNGKTAGKGHKGQNARSGGGVRLGFE) is disordered. 2 stretches are compositionally biased toward gly residues: residues 21–31 (RGIGSGNGKTA) and 42–51 (SGGGVRLGFE).

The protein belongs to the universal ribosomal protein uL15 family. As to quaternary structure, part of the 50S ribosomal subunit.

Binds to the 23S rRNA. The polypeptide is Large ribosomal subunit protein uL15 (Bacillus cereus (strain G9842)).